Consider the following 293-residue polypeptide: Ribosomal protein L11 methyltransferase (293 aa).

Positions 145, 166, 188, and 230 each coordinate S-adenosyl-L-methionine.

The protein belongs to the methyltransferase superfamily. PrmA family.

The protein localises to the cytoplasm. It carries out the reaction L-lysyl-[protein] + 3 S-adenosyl-L-methionine = N(6),N(6),N(6)-trimethyl-L-lysyl-[protein] + 3 S-adenosyl-L-homocysteine + 3 H(+). Functionally, methylates ribosomal protein L11. This Shewanella denitrificans (strain OS217 / ATCC BAA-1090 / DSM 15013) protein is Ribosomal protein L11 methyltransferase.